The sequence spans 89 residues: Small ribosomal subunit protein uS15 (89 aa).

Belongs to the universal ribosomal protein uS15 family. In terms of assembly, part of the 30S ribosomal subunit. Forms a bridge to the 50S subunit in the 70S ribosome, contacting the 23S rRNA.

One of the primary rRNA binding proteins, it binds directly to 16S rRNA where it helps nucleate assembly of the platform of the 30S subunit by binding and bridging several RNA helices of the 16S rRNA. Functionally, forms an intersubunit bridge (bridge B4) with the 23S rRNA of the 50S subunit in the ribosome. The chain is Small ribosomal subunit protein uS15 from Exiguobacterium sibiricum (strain DSM 17290 / CCUG 55495 / CIP 109462 / JCM 13490 / 255-15).